The sequence spans 88 residues: Large ribosomal subunit protein bL31B (88 aa).

This sequence belongs to the bacterial ribosomal protein bL31 family. Type B subfamily. As to quaternary structure, part of the 50S ribosomal subunit.

The polypeptide is Large ribosomal subunit protein bL31B (Paraburkholderia phytofirmans (strain DSM 17436 / LMG 22146 / PsJN) (Burkholderia phytofirmans)).